A 228-amino-acid chain; its full sequence is Derlin-3 (228 aa).

Residues 1–22 (MAGQRLAAGFLQVPAVTRAYTA) are Cytoplasmic-facing. The chain crosses the membrane as a helical span at residues 23-43 (ACVLTTAAVQLELLSPFQLYF). Residues 44 to 57 (NPHLVFRKFQVWRL) are Lumenal-facing. The helical transmembrane segment at 58 to 78 (ITTFLFFGPLGFGFFFNMLFV) threads the bilayer. Over 79-98 (FRYCRMLEEGSFRGRKADFV) the chain is Cytoplasmic. The chain crosses the membrane as a helical span at residues 99–119 (FMFLFGGVLMTLLGFLGSLFF). Over 120 to 168 (LGQALMAMLVYVWSRRSPHVRVNFFGLLNFQAPFLPWALMGFSLLLGNS) the chain is Lumenal. A helical transmembrane segment spans residues 169–189 (VVTDLLGILVGHIYYFLEDVF). Topologically, residues 190–228 (PNQPGGKRLLLTPSVLKLLLDDPQEDPDYLPLPEEQPEL) are cytoplasmic.

It belongs to the derlin family. Forms homo- and heterooligomers with DERL2 and, to a lesser extent, with DERL1. Interacts with VCP and EDEM1. Interacts with SELENOK and SELENOS. Interacts with the signal recognition particle/SRP and the SRP receptor; in the process of endoplasmic reticulum stress-induced pre-emptive quality control. Highly expressed in spleen, lung, liver, spleen and testis. Expressed at intermediate level in kidney. Weakly or not expressed in brain, heart and skeletal muscle.

It localises to the endoplasmic reticulum membrane. In terms of biological role, functional component of endoplasmic reticulum-associated degradation (ERAD) for misfolded lumenal glycoproteins, but not that of misfolded nonglycoproteins. May act by forming a channel that allows the retrotranslocation of misfolded glycoproteins into the cytosol where they are ubiquitinated and degraded by the proteasome. May mediate the interaction between VCP and the misfolded glycoproteins. May be involved in endoplasmic reticulum stress-induced pre-emptive quality control, a mechanism that selectively attenuates the translocation of newly synthesized proteins into the endoplasmic reticulum and reroutes them to the cytosol for proteasomal degradation. This chain is Derlin-3, found in Mus musculus (Mouse).